The primary structure comprises 286 residues: Translocon-associated protein subunit alpha (286 aa).

An N-terminal signal peptide occupies residues 1–20 (MSSLRRLLLLLLLVFPATLL). The Lumenal portion of the chain corresponds to 21–207 (LRVGPGGSLA…EREDGLDGET (187 aa)). The segment covering 37–75 (EDEETVEDSIIEDEDDEAEVEEDEPTDLAEDKEEDDVSG) has biased composition (acidic residues). Positions 37 to 83 (EDEETVEDSIIEDEDDEAEVEEDEPTDLAEDKEEDDVSGEPEASPSA) are disordered. N-linked (GlcNAc...) asparagine glycosylation is found at Asn136 and Asn191. The helical transmembrane segment at 208–228 (IFMYMFLAGLGLLVVVGLHQL) threads the bilayer. At 229–286 (LESRKRKRPIQKVEMGTSSQNDVDMSWIPQETLNQINKASPRRLPRKRAQKRSVGSDE) the chain is on the cytoplasmic side. Ser247 bears the Phosphoserine mark. The residue at position 260 (Thr260) is a Phosphothreonine. Residues 261 to 286 (LNQINKASPRRLPRKRAQKRSVGSDE) form a disordered region. At Ser268 the chain carries Phosphoserine. Residues 268 to 279 (SPRRLPRKRAQK) show a composition bias toward basic residues.

Belongs to the TRAP-alpha family. In terms of assembly, heterotetramer of TRAP-alpha, TRAP-beta, TRAP-delta and TRAP-gamma. Interacts with palmitoylated calnexin (CALX), the interaction is required for efficient folding of glycosylated proteins. Phosphorylated in its cytoplasmic tail.

Its subcellular location is the endoplasmic reticulum membrane. Its function is as follows. TRAP proteins are part of a complex whose function is to bind calcium to the ER membrane and thereby regulate the retention of ER resident proteins. May be involved in the recycling of the translocation apparatus after completion of the translocation process or may function as a membrane-bound chaperone facilitating folding of translocated proteins. This chain is Translocon-associated protein subunit alpha (SSR1), found in Bos taurus (Bovine).